Here is a 153-residue protein sequence, read N- to C-terminus: uncharacterized protein (153 aa).

A signal peptide spans 1–18; that stretch reads MSARISKQLRLSVPPCLA. N-linked (GlcNAc...) asparagine glycans are attached at residues Asn19 and Asn25. At 19 to 43 the chain is on the extracellular side; sequence NRTTASNSSSCVTEVEPLLQSFSST. A helical transmembrane segment spans residues 44–64; that stretch reads LVLIVLATVIFCLVVLSLSTF. Residues 65 to 153 are Cytoplasmic-facing; it reads HMHKSKMKKR…EHLQQSVVLS (89 aa). Residues 75-115 form a disordered region; it reads KIEKAQEEYERDHCSPKAERGHLHGMGRGGTHGSPTSPTIQ. Over residues 77–96 the composition is skewed to basic and acidic residues; the sequence is EKAQEEYERDHCSPKAERGH.

The protein localises to the membrane. This is an uncharacterized protein from Xenopus tropicalis (Western clawed frog).